We begin with the raw amino-acid sequence, 105 residues long: MKTILLFLGVCAVGASMMTGGWTNKDVNDEEVKKLAIFASTKFNEKSNSLVFEKMCKILEAKSQLVAGMLYDITFEASPTVCKKNDKNYVPIYQCPLLPCAPRKI.

Residues 1–23 (MKTILLFLGVCAVGASMMTGGWT) form the signal peptide.

It belongs to the cystatin family. Contains 2 disulfide bonds. As to expression, expressed by the venom gland.

Its subcellular location is the secreted. Inhibits various C1 cysteine proteases. This protein has no toxic activity and its function in the venom is unknown. It may play a role as a housekeeping or regulatory protein. The sequence is that of U7-hexatoxin-Hi1a from Hadronyche infensa (Fraser island funnel-web spider).